The sequence spans 92 residues: Large ribosomal subunit protein bL27 (92 aa).

Positions Met1–Gly22 are disordered.

It belongs to the bacterial ribosomal protein bL27 family.

This Mycoplasmopsis agalactiae (strain NCTC 10123 / CIP 59.7 / PG2) (Mycoplasma agalactiae) protein is Large ribosomal subunit protein bL27.